A 350-amino-acid chain; its full sequence is ATPase GET3 (350 aa).

Position 26-33 (26-33) interacts with ATP; sequence KGGVGKTT. Residue aspartate 57 is part of the active site. Residues glutamate 243 and asparagine 270 each coordinate ATP. Zn(2+) contacts are provided by cysteine 282 and cysteine 285.

It belongs to the arsA ATPase family. Homodimer. Component of the Golgi to ER traffic (GET) complex, which is composed of GET1, GET2 and GET3. Within the complex, GET1 and GET2 form a heterotetramer which is stabilized by phosphatidylinositol binding and which binds to the GET3 homodimer. Interacts with the chloride channel protein GEF1.

It is found in the cytoplasm. The protein resides in the endoplasmic reticulum. Its subcellular location is the golgi apparatus. Functionally, ATPase required for the post-translational delivery of tail-anchored (TA) proteins to the endoplasmic reticulum. Recognizes and selectively binds the transmembrane domain of TA proteins in the cytosol. This complex then targets to the endoplasmic reticulum by membrane-bound receptors GET1 and GET2, where the tail-anchored protein is released for insertion. This process is regulated by ATP binding and hydrolysis. ATP binding drives the homodimer towards the closed dimer state, facilitating recognition of newly synthesized TA membrane proteins. ATP hydrolysis is required for insertion. Subsequently, the homodimer reverts towards the open dimer state, lowering its affinity for the GET1-GET2 receptor, and returning it to the cytosol to initiate a new round of targeting. Cooperates with the HDEL receptor ERD2 to mediate the ATP-dependent retrieval of resident ER proteins that contain a C-terminal H-D-E-L retention signal from the Golgi to the ER. Involved in low-level resistance to the oxyanions arsenite and arsenate, and in heat tolerance. This chain is ATPase GET3, found in Candida albicans (strain SC5314 / ATCC MYA-2876) (Yeast).